The sequence spans 431 residues: Protein translocase subunit SecY (431 aa).

10 helical membrane passes run 18–38 (IIFT…PVPH), 64–84 (LFNF…SIII), 116–136 (FTIV…NNMA), 146–166 (VGTY…LMWL), 175–195 (VGNG…PQTI), 214–234 (IIKV…VIFI), 262–282 (LPLK…AFIT), 309–329 (PVGM…YAFV), 369–389 (FVGS…VNIA), and 390–410 (GLPS…GVAL).

The protein belongs to the SecY/SEC61-alpha family. In terms of assembly, component of the Sec protein translocase complex. Heterotrimer consisting of SecY, SecE and SecG subunits. The heterotrimers can form oligomers, although 1 heterotrimer is thought to be able to translocate proteins. Interacts with the ribosome. Interacts with SecDF, and other proteins may be involved. Interacts with SecA.

It is found in the cell membrane. Its function is as follows. The central subunit of the protein translocation channel SecYEG. Consists of two halves formed by TMs 1-5 and 6-10. These two domains form a lateral gate at the front which open onto the bilayer between TMs 2 and 7, and are clamped together by SecE at the back. The channel is closed by both a pore ring composed of hydrophobic SecY resides and a short helix (helix 2A) on the extracellular side of the membrane which forms a plug. The plug probably moves laterally to allow the channel to open. The ring and the pore may move independently. This Bacillus licheniformis (strain ATCC 14580 / DSM 13 / JCM 2505 / CCUG 7422 / NBRC 12200 / NCIMB 9375 / NCTC 10341 / NRRL NRS-1264 / Gibson 46) protein is Protein translocase subunit SecY.